Reading from the N-terminus, the 145-residue chain is MIETIVEQDFNRLFEIEQAAHLVPWSKGTLLNNQGAKYLNLKYTEQDNIIAFAICQTLLDEATLFNLAVDPAFQAQGYAKKLLTALINQLQARGISTLWLEVRQSNTIAQKLYDSVGFNQITIRKNYYPMPDGSRENAVIMALYL.

An N-acetyltransferase domain is found at 1 to 145 (MIETIVEQDF…ENAVIMALYL (145 aa)). 67 to 69 (LAV) serves as a coordination point for acetyl-CoA. The Proton acceptor role is filled by E101. An acetyl-CoA-binding site is contributed by N106. The active-site Proton donor is the Y113.

This sequence belongs to the acetyltransferase family. RimI subfamily.

The protein localises to the cytoplasm. It carries out the reaction N-terminal L-alanyl-[ribosomal protein bS18] + acetyl-CoA = N-terminal N(alpha)-acetyl-L-alanyl-[ribosomal protein bS18] + CoA + H(+). In terms of biological role, acetylates the N-terminal alanine of ribosomal protein bS18. This chain is [Ribosomal protein bS18]-alanine N-acetyltransferase, found in Haemophilus ducreyi (strain 35000HP / ATCC 700724).